The primary structure comprises 210 residues: ESCRT-III complex subunit did4 (210 aa).

Residues Met-1–Lys-38 are disordered. Positions Gln-15–Arg-97 form a coiled coil. Residues Gly-26 to Lys-38 are compositionally biased toward basic and acidic residues.

The protein belongs to the SNF7 family. As to quaternary structure, core component of the ESCRT-III complex (endosomal sorting required for transport complex III). ESCRT-III appears to be sequentially assembled as a flat lattice on the endosome membrane.

The protein localises to the cytoplasm. Its subcellular location is the endosome membrane. Functionally, required for the sorting and concentration of proteins resulting in the entry of these proteins into the invaginating vesicles of the multivesicular body (MVB). Acts a component of the ESCRT-III complex, which appears to be critical for late steps in MVB sorting, such as membrane invagination and final cargo sorting and recruitment of late-acting components of the sorting machinery. The MVB pathway requires the sequential function of ESCRT-O, -I,-II and -III complex assemblies. This is ESCRT-III complex subunit did4 (did4) from Schizosaccharomyces pombe (strain 972 / ATCC 24843) (Fission yeast).